Consider the following 416-residue polypeptide: Adenylosuccinate synthetase (416 aa).

GTP contacts are provided by residues 12 to 18 (GDEGKGK) and 40 to 42 (GHT). Asp-13 (proton acceptor) is an active-site residue. Residues Asp-13 and Gly-40 each coordinate Mg(2+). Residues 13–16 (DEGK), 38–41 (NAGH), Thr-125, Arg-139, Gln-219, Thr-234, and Arg-298 each bind IMP. Catalysis depends on His-41, which acts as the Proton donor. Substrate is bound at residue 294-300 (TVTGRKR). Residues Arg-300, 326-328 (KLD), and 404-406 (STS) contribute to the GTP site.

This sequence belongs to the adenylosuccinate synthetase family. In terms of assembly, homodimer. Mg(2+) serves as cofactor.

The protein resides in the cytoplasm. The catalysed reaction is IMP + L-aspartate + GTP = N(6)-(1,2-dicarboxyethyl)-AMP + GDP + phosphate + 2 H(+). Its pathway is purine metabolism; AMP biosynthesis via de novo pathway; AMP from IMP: step 1/2. Its function is as follows. Plays an important role in the de novo pathway of purine nucleotide biosynthesis. Catalyzes the first committed step in the biosynthesis of AMP from IMP. The chain is Adenylosuccinate synthetase from Aliarcobacter butzleri (strain RM4018) (Arcobacter butzleri).